Consider the following 467-residue polypeptide: Putative odorant receptor 85e (467 aa).

At 1–60 (MASLQFHGNVDADIRYDISLDPARESNLFRLLMGLQLANGTKPSPRLPKWWPKRLEMIGK) the chain is on the cytoplasmic side. Residues 61-81 (VLPKAYCSMVIFTSLHLGVLF) form a helical membrane-spanning segment. The Extracellular portion of the chain corresponds to 82-98 (TKTTLDVLPTGELQAIT). Residues 99–119 (DALTMTIIYFFTGYGTIYWCL) form a helical membrane-spanning segment. The Cytoplasmic portion of the chain corresponds to 120 to 159 (RSRRLLAYMEHMNREYRHHSLAGVTFVSSHAAFRMSRNFT). Residues 160-180 (VVWIMSCLLGVISWGVSPLML) form a helical membrane-spanning segment. Residues 181–212 (GIRMLPLQCWYPFDALGPGTYTAVYATQLFGQ) lie on the Extracellular side of the membrane. A helical membrane pass occupies residues 213–233 (IMVGMTFGFGGSLFVTLSLLL). At 234 to 286 (LGQFDVLYCSLKNLDAHTKLLGGESVNGLSSLQEELLLGDSKRELNQYVLLQE) the chain is on the cytoplasmic side. Residues 287 to 307 (HPTDLLRLSAGRKCPDQGNAF) form a helical membrane-spanning segment. The Extracellular portion of the chain corresponds to 308-334 (HNALVECIRLHRFILHCSQELENLFSP). A helical transmembrane segment spans residues 335–355 (YCLVKSLQITFQLCLLVFVGV). The Cytoplasmic segment spans residues 356–367 (SGTREVLRIVNQ). The chain crosses the membrane as a helical span at residues 368–388 (LQYLGLTIFELLMFTYCGELL). At 389–467 (SRHSIRSGDA…LAAKKTESEL (79 aa)) the chain is on the extracellular side.

Belongs to the insect chemoreceptor superfamily. Heteromeric odorant receptor channel (TC 1.A.69) family. Or2a subfamily. As to quaternary structure, interacts with Orco. Complexes exist early in the endomembrane system in olfactory sensory neurons (OSNs), coupling these complexes to the conserved ciliary trafficking pathway. As to expression, expressed in 15% of the 120 sensory neurons within the maxillary palp.

It is found in the cell membrane. Functionally, odorant receptor which mediates acceptance or avoidance behavior, depending on its substrates. The odorant receptor repertoire encodes a large collection of odor stimuli that vary widely in identity, intensity, and duration. May form a complex with Orco to form odorant-sensing units, providing sensitive and prolonged odorant signaling and calcium permeability. The chain is Putative odorant receptor 85e (Or85e) from Drosophila melanogaster (Fruit fly).